Reading from the N-terminus, the 225-residue chain is UPF0758 protein SEQ_1136 (225 aa).

Residues 102 to 224 (PVLSSAQVAE…YYSFREKSDL (123 aa)) form the MPN domain. The Zn(2+) site is built by histidine 173, histidine 175, and aspartate 186. The JAMM motif motif lies at 173–186 (HNHPSGLTKPSAND).

The protein belongs to the UPF0758 family.

The protein is UPF0758 protein SEQ_1136 of Streptococcus equi subsp. equi (strain 4047).